The sequence spans 148 residues: Receptor activity-modifying protein 1 (148 aa).

A signal peptide spans M1–A26. 3 disulfide bridges follow: C27–C82, C40–C72, and C57–C104. Topologically, residues C27 to I118 are extracellular. A helical membrane pass occupies residues L119–R140. Residues S141–V148 lie on the Cytoplasmic side of the membrane.

This sequence belongs to the RAMP family. As to quaternary structure, heterodimer of CALCRL and RAMP1; the interaction induces allosteric modulation of CALCRL function and CGRP1/CALCA and CGRP2/CALCB ligand specificity. Heterodimer of CALCR and RAMP1; interaction forms the AMYR1 receptor complex for amylin/IAPP and CGRP1/CALCA ligands.

The protein localises to the cell membrane. Accessory protein that interacts with and modulates the function of G-protein coupled receptors including calcitonin gene-related peptide type 1 receptor (CALCRL) and calcitonin receptor (CALCR). Required for the transport of CALCRL to the plasma membrane. Together with CALCRL, form the receptor complex for the calcitonin gene-related peptides CGRP1/CALCA and CGRP2/CALCB. Together with CALCR, form the AMYR1 receptor complex for amylin/IAPP and CGRP1/CALCA. In Cavia porcellus (Guinea pig), this protein is Receptor activity-modifying protein 1 (RAMP1).